The chain runs to 118 residues: SPbeta prophage-derived uncharacterized protein YoqR (118 aa).

The sequence is that of SPbeta prophage-derived uncharacterized protein YoqR (yoqR) from Bacillus subtilis (strain 168).